The chain runs to 275 residues: Methylglyoxal reductase DkgA (275 aa).

Catalysis depends on Tyr51, which acts as the Proton donor. His107 is a substrate binding site. NADP(+) is bound at residue 187-241 (SPLAQGGEGVFDQKVIRELADKYGKTPAQIVIRWHLDCGLVVIPKSVTPSRIAEN).

It belongs to the aldo/keto reductase family. As to quaternary structure, monomer.

It is found in the cytoplasm. It carries out the reaction hydroxyacetone + NADP(+) = methylglyoxal + NADPH + H(+). Its function is as follows. Aldo-keto reductase that significantly contributes to cellular methylglyoxal detoxification by catalyzing the NADPH-dependent conversion of methylglyoxal to acetol. This chain is Methylglyoxal reductase DkgA, found in Salmonella typhimurium (strain LT2 / SGSC1412 / ATCC 700720).